The chain runs to 162 residues: 6,7-dimethyl-8-ribityllumazine synthase (162 aa).

Residues F23, 61-63 (AYE), and 85-87 (AVI) each bind 5-amino-6-(D-ribitylamino)uracil. A (2S)-2-hydroxy-3-oxobutyl phosphate-binding site is contributed by 90–91 (DT). H93 (proton donor) is an active-site residue. F118 is a 5-amino-6-(D-ribitylamino)uracil binding site. R132 contacts (2S)-2-hydroxy-3-oxobutyl phosphate.

This sequence belongs to the DMRL synthase family.

It carries out the reaction (2S)-2-hydroxy-3-oxobutyl phosphate + 5-amino-6-(D-ribitylamino)uracil = 6,7-dimethyl-8-(1-D-ribityl)lumazine + phosphate + 2 H2O + H(+). The protein operates within cofactor biosynthesis; riboflavin biosynthesis; riboflavin from 2-hydroxy-3-oxobutyl phosphate and 5-amino-6-(D-ribitylamino)uracil: step 1/2. Functionally, catalyzes the formation of 6,7-dimethyl-8-ribityllumazine by condensation of 5-amino-6-(D-ribitylamino)uracil with 3,4-dihydroxy-2-butanone 4-phosphate. This is the penultimate step in the biosynthesis of riboflavin. This Synechococcus sp. (strain CC9902) protein is 6,7-dimethyl-8-ribityllumazine synthase.